A 1193-amino-acid chain; its full sequence is Protogenin (1193 aa).

The first 23 residues, Met1–Ser23, serve as a signal peptide directing secretion. Ig-like domains follow at residues Val24–Thr124, Ser126–Thr217, Pro230–Thr317, and Pro322–Thr406. At Val24–Thr944 the chain is on the extracellular side. Disulfide bonds link Cys54-Cys107 and Cys150-Cys200. N-linked (GlcNAc...) asparagine glycosylation occurs at Asn84. Asn238 carries N-linked (GlcNAc...) asparagine glycosylation. 2 cysteine pairs are disulfide-bonded: Cys251/Cys299 and Cys343/Cys390. Fibronectin type-III domains are found at residues Ala416–Asp510, Pro512–Ala608, Ala613–Arg712, Pro719–Glu812, and Pro817–Lys912. An N-linked (GlcNAc...) asparagine glycan is attached at Asn625. A helical transmembrane segment spans residues Gly945–Ile965. Residues Tyr966–Val1193 lie on the Cytoplasmic side of the membrane. 2 disordered regions span residues Ser974–Pro1018 and Val1078–Val1193. Polar residues-rich tracts occupy residues Thr978 to Ser990 and Pro1086 to Phe1095. Over residues Asp1105 to His1133 the composition is skewed to basic and acidic residues. Residues Ser1136–Cys1150 show a composition bias toward polar residues.

It belongs to the immunoglobulin superfamily. DCC family.

The protein resides in the membrane. Its function is as follows. May play a role in anteroposterior axis elongation. The sequence is that of Protogenin from Rattus norvegicus (Rat).